We begin with the raw amino-acid sequence, 87 residues long: Cell division topological specificity factor (87 aa).

The protein belongs to the MinE family.

Prevents the cell division inhibition by proteins MinC and MinD at internal division sites while permitting inhibition at polar sites. This ensures cell division at the proper site by restricting the formation of a division septum at the midpoint of the long axis of the cell. The protein is Cell division topological specificity factor of Aliivibrio fischeri (strain ATCC 700601 / ES114) (Vibrio fischeri).